Reading from the N-terminus, the 386-residue chain is Probable pectin lyase E (386 aa).

Residues 1-16 form the signal peptide; it reads MKTAVLSLFLALQTYA. Cys-77 and Cys-101 are joined by a disulfide. Asn-124 is a glycosylation site (N-linked (GlcNAc...) asparagine). Arg-251 is an active-site residue. Cys-326 and Cys-334 are disulfide-bonded.

Belongs to the polysaccharide lyase 1 family.

It localises to the secreted. The enzyme catalyses Eliminative cleavage of (1-&gt;4)-alpha-D-galacturonan methyl ester to give oligosaccharides with 4-deoxy-6-O-methyl-alpha-D-galact-4-enuronosyl groups at their non-reducing ends.. Functionally, pectinolytic enzymes consist of four classes of enzymes: pectin lyase, polygalacturonase, pectin methylesterase and rhamnogalacturonase. Among pectinolytic enzymes, pectin lyase is the most important in depolymerization of pectin, since it cleaves internal glycosidic bonds of highly methylated pectins. This Aspergillus fumigatus (strain CBS 144.89 / FGSC A1163 / CEA10) (Neosartorya fumigata) protein is Probable pectin lyase E (pelE).